The sequence spans 35 residues: Neurotoxin (35 aa).

Cystine bridges form between Cys-7–Cys-27, Cys-14–Cys-32, and Cys-18–Cys-34.

As to expression, expressed by the venom gland.

The protein resides in the secreted. Its function is as follows. Neurotoxin. Decreases the action potential of myelinated nerves in mice and frogs. This is Neurotoxin from Buthus sp. (strain IY-2001) (Scorpion).